The chain runs to 383 residues: uncharacterized protein (383 aa).

It belongs to the peptidase M20 family.

This is an uncharacterized protein from Staphylococcus haemolyticus (strain JCSC1435).